A 110-amino-acid chain; its full sequence is UPF0060 membrane protein Bpet0062 (110 aa).

4 consecutive transmembrane segments (helical) span residues 7–27 (LGLF…PYLW), 33–53 (SAWL…LLTL), 63–83 (AAYG…VDGV), and 86–106 (ATTD…IMAG).

Belongs to the UPF0060 family.

It localises to the cell inner membrane. This is UPF0060 membrane protein Bpet0062 from Bordetella petrii (strain ATCC BAA-461 / DSM 12804 / CCUG 43448).